A 325-amino-acid chain; its full sequence is Bifunctional nuclease 1 (325 aa).

Positions C117–V252 constitute a BFN domain. The UVR domain maps to T284 to K318.

This sequence belongs to the bifunctional nuclease family.

It localises to the nucleus. In terms of biological role, bifunctional nuclease with both RNase and DNase activities. Involved in basal defense response. Participates in abscisic acid-derived callose deposition following infection by a necrotrophic pathogen. This chain is Bifunctional nuclease 1 (BBD1), found in Arabidopsis thaliana (Mouse-ear cress).